The primary structure comprises 555 residues: CCR4-NOT transcription complex subunit 6-like (555 aa).

Positions 1-152 (MRLIGMPKEK…SLYQDPDGTR (152 aa)) are required for interaction with CNOT1, CNOT3 and CNOT7. LRR repeat units follow at residues 57–78 (HLTALHLNDNNLARIPPDIAKL), 80–101 (NLVYLDLSSNKLRSLPAELGNM), 103–125 (SLRELLLNDNYLRVLPYELGRLF), and 126–148 (QLQTLGLTGNPLSQDIMSLYQDP). The interval 158–555 (MLDNLAVHPE…VNGVHLPNRR (398 aa)) is nuclease domain. Glu240 serves as a coordination point for Mg(2+). Glu240, Glu276, His360, and Pro365 together coordinate substrate. Residue Asp410 participates in Mg(2+) binding. The active-site Proton donor/acceptor is the Asp410. Asn412, Asn479, and Phe484 together coordinate substrate.

This sequence belongs to the CCR4/nocturin family. As to quaternary structure, component of the CCR4-NOT complex; distinct complexes seem to exist that differ in the participation of probably mutually exclusive catalytic subunits; the complex contains two deadenylase subunits, CNOT6 or CNOT6L, and CNOT7 or CNOT8. Interacts with CNOT1, CNOT3, CNOT7, CNOT8 and CNOT9. Interacts with TOB1. Interacts with NANOS2. Interacts with ZFP36. Interacts with ZFP36L2. Interacts with RBM46. Mg(2+) is required as a cofactor.

The protein localises to the cytoplasm. The protein resides in the nucleus. It carries out the reaction Exonucleolytic cleavage of poly(A) to 5'-AMP.. Functionally, poly(A) nuclease with 3'-5' RNase activity. Catalytic component of the CCR4-NOT complex which is one of the major cellular mRNA deadenylases and is linked to various cellular processes including bulk mRNA degradation, miRNA-mediated repression, translational repression during translational initiation and general transcription regulation. Additional complex functions may be a consequence of its influence on mRNA expression. Involved in mRNA decay mediated by the major-protein-coding determinant of instability (mCRD) of the FOS gene in the cytoplasm. Involved in deadenylation-dependent degradation of CDKN1B mRNA. Its mRNA deadenylase activity can be inhibited by TOB1. Mediates cell proliferation and cell survival and prevents cellular senescence. This Mus musculus (Mouse) protein is CCR4-NOT transcription complex subunit 6-like (Cnot6l).